Here is a 149-residue protein sequence, read N- to C-terminus: Snake venom vascular endothelial growth factor toxin 2 (149 aa).

The signal sequence occupies residues 1–24; it reads MAAYLLAVAILFCIQGWPSGTVQG. The residue at position 25 (glutamine 25) is a Pyrrolidone carboxylic acid. 3 cysteine pairs are disulfide-bonded: cysteine 38-cysteine 80, cysteine 69-cysteine 115, and cysteine 73-cysteine 117. The interval 118–149 is disordered; it reads RPRSGRVNSGKRKRNPEEGGAESQVPLGLTSF.

Belongs to the PDGF/VEGF growth factor family. Snake venom VEGF subfamily. In terms of assembly, homodimer; disulfide-linked. Interacts with VEGF receptor-1 (FLT1) with a high affinity, whereas it binds to VEGF receptor-2 (KDR) with a low affinity. Does not bind VEGF receptor-3 (FLT4). In terms of tissue distribution, expressed by the venom gland.

It localises to the secreted. Snake venom VEGFs that may contribute to venom dispersion and prey subjugation by inducing vascular permeability and hypotension. This protein induces an increase in capillary permeability after intradermal injection, as well as a drastic hypotensive effect after intravenous injection. The hypotension is mediated by nitric oxide (NO), which is produced by VEGF-activated endothelium NO synthase. Also induces angiogenesis in vitro. Like other crotalid VEGFs, this protein interacts with VEGF receptor-1 (FLT1) with a high affinity, whereas it binds to VEGF receptor-2 (KDR) with a low affinity. In Sistrurus catenatus edwardsii (Desert massasauga), this protein is Snake venom vascular endothelial growth factor toxin 2.